We begin with the raw amino-acid sequence, 67 residues long: DNA-directed RNA polymerase subunit omega (67 aa).

It belongs to the RNA polymerase subunit omega family. In terms of assembly, the RNAP catalytic core consists of 2 alpha, 1 beta, 1 beta' and 1 omega subunit. When a sigma factor is associated with the core the holoenzyme is formed, which can initiate transcription.

It carries out the reaction RNA(n) + a ribonucleoside 5'-triphosphate = RNA(n+1) + diphosphate. Promotes RNA polymerase assembly. Latches the N- and C-terminal regions of the beta' subunit thereby facilitating its interaction with the beta and alpha subunits. The protein is DNA-directed RNA polymerase subunit omega of Nautilia profundicola (strain ATCC BAA-1463 / DSM 18972 / AmH).